Here is a 295-residue protein sequence, read N- to C-terminus: MPWIQLRLHSSSEHADAISDLLMDEGSVSITFEDGKDQPIFEPKLGETPLWNDTVVVALFDADFDLAPVVDMLKSLPFLGSELKYKIEQIEDKDWVREWMDSYHPIQFGKRLWICPSWREVPDPEAVNVILDPGLAFGTGTHPTTALCLEWLDSLDLAGKDIIDFGCGSGILAVAALKLGAAKATGIDIDYQAIDASRDNAQRNQVEDRLALYLPEDQPAGLKAEVLVANILAGPLRELAPLIQALVQPGGKLALSGLLKEQAAEISECYAQWFDMDQPAHKDDWSRLTGVRKSL.

The S-adenosyl-L-methionine site is built by T145, G166, D188, and N230.

It belongs to the methyltransferase superfamily. PrmA family.

It is found in the cytoplasm. The enzyme catalyses L-lysyl-[protein] + 3 S-adenosyl-L-methionine = N(6),N(6),N(6)-trimethyl-L-lysyl-[protein] + 3 S-adenosyl-L-homocysteine + 3 H(+). In terms of biological role, methylates ribosomal protein L11. In Shewanella amazonensis (strain ATCC BAA-1098 / SB2B), this protein is Ribosomal protein L11 methyltransferase.